Consider the following 285-residue polypeptide: Undecaprenyl-diphosphatase (285 aa).

The next 7 membrane-spanning stretches (helical) occupy residues 3-23 (ILLL…EFLP), 41-61 (GEIV…AVIW), 87-107 (LLIA…LIKE), 109-129 (LFHP…ILWV), 197-217 (TEFS…YSLI), 226-246 (GDLP…LVCI), and 260-280 (VFAW…WGGW).

This sequence belongs to the UppP family.

Its subcellular location is the cell inner membrane. The enzyme catalyses di-trans,octa-cis-undecaprenyl diphosphate + H2O = di-trans,octa-cis-undecaprenyl phosphate + phosphate + H(+). Functionally, catalyzes the dephosphorylation of undecaprenyl diphosphate (UPP). Confers resistance to bacitracin. In Methylibium petroleiphilum (strain ATCC BAA-1232 / LMG 22953 / PM1), this protein is Undecaprenyl-diphosphatase.